Consider the following 143-residue polypeptide: Large ribosomal subunit protein uL11 (143 aa).

This sequence belongs to the universal ribosomal protein uL11 family. As to quaternary structure, part of the ribosomal stalk of the 50S ribosomal subunit. Interacts with L10 and the large rRNA to form the base of the stalk. L10 forms an elongated spine to which L12 dimers bind in a sequential fashion forming a multimeric L10(L12)X complex. Post-translationally, one or more lysine residues are methylated.

Functionally, forms part of the ribosomal stalk which helps the ribosome interact with GTP-bound translation factors. The protein is Large ribosomal subunit protein uL11 of Cutibacterium acnes (strain DSM 16379 / KPA171202) (Propionibacterium acnes).